A 445-amino-acid polypeptide reads, in one-letter code: Histone acetyltransferase ESA1 (445 aa).

S17 bears the Phosphoserine mark. The Tudor-knot domain occupies 22-74; sequence IIKCQCWVQKNDEERLAEILSINTRKAPPKFYVHYVNYNKRLDEWITTDRINL. The interval 88-114 is disordered; sequence EDNKKQKKKKATNTSETPQDSLQDGVD. Residues 99-109 are compositionally biased toward polar residues; it reads TNTSETPQDSL. In terms of domain architecture, MYST-type HAT spans 162–433; sequence ARVRNLNRII…IDPNRLIWKP (272 aa). Residues 195–220 form a C2HC MYST-type; degenerate zinc finger; that stretch reads IYIDDFTLQYFGSKKQYERYRKKCTL. The short motif at 245 to 266 is the ESA1-RPD3 motif element; that stretch reads RTWCRNLCLLSKLFLDHKTLYY. K262 is subject to N6-acetyllysine; by autocatalysis. Acetyl-CoA is bound by residues 303-307 and 312-318; these read ACILT and QRMGYGK. The active-site Proton donor/acceptor is E338. Position 342 (S342) interacts with acetyl-CoA.

The protein belongs to the MYST (SAS/MOZ) family. As to quaternary structure, component of the NuA4 histone acetyltransferase complex composed of at least ACT1, ARP4, EAF3, EAF5, EAF6, EAF7, EPL1, ESA1, SWC4, TRA1, VID21, YAF9 and YNG2. The complex interacts with histones H4 (HHF1 and HHF2), H3 (HHT1 and HHT2) and H2A (HTA1 and HTA2). Post-translationally, autoacetylation at Lys-262 is required for proper function.

It carries out the reaction L-lysyl-[histone] + acetyl-CoA = N(6)-acetyl-L-lysyl-[histone] + CoA + H(+). It catalyses the reaction L-lysyl-[protein] + acetyl-CoA = N(6)-acetyl-L-lysyl-[protein] + CoA + H(+). The enzyme catalyses 2-hydroxyisobutanoyl-CoA + L-lysyl-[protein] = N(6)-(2-hydroxyisobutanoyl)-L-lysyl-[protein] + CoA + H(+). The catalysed reaction is (2E)-butenoyl-CoA + L-lysyl-[protein] = N(6)-(2E)-butenoyl-L-lysyl-[protein] + CoA + H(+). Catalytic component of the NuA4 histone acetyltransferase (HAT), a multiprotein complex involved in epigenetic transcriptional activation of selected genes principally by acetylation of nucleosomal histones H4, H3, H2B, H2A and H2A variant H2A.Z. Acetylates histone H4 to form H4K5ac, H4K8ac, H4K12ac and H4K16ac, histone H3 to form H3K14ac, histone H2B to form H2BK16ac, histone H2A to form H2AK4ac and H2AK7ac, and histone variant H2A.Z to form H2A.ZK14ac. Acetylation of histones gives a specific tag for epigenetic transcription initiation and elongation. Acetylation of histone H4 is essential for DNA double-strand break repair through homologous recombination. Involved in cell cycle progression. Recruitment to promoters depends on H3K4me. Also acetylates non-histone proteins, such as ATG3 and PAH1. Regulates autophagy by acetylating ATG3, controlling interaction the interaction between ATG3 and ATG8 and ATG8 lipidation. Acts as a regulator of fatty-acid-induced triacylglycerol synthesis by catalyzing acetylation of PAH1, thereby promoting the synthesis of diacylglycerol. In addition to protein acetyltransferase, can use different acyl-CoA substrates, such as 2-hydroxyisobutanoyl-CoA (2-hydroxyisobutyryl-CoA) or (2E)-butenoyl-CoA (crotonyl-CoA), and is able to mediate protein 2-hydroxyisobutyrylation and crotonylation, respectively. Catalyzes histone crotonylation. The protein is Histone acetyltransferase ESA1 of Saccharomyces cerevisiae (strain ATCC 204508 / S288c) (Baker's yeast).